Consider the following 515-residue polypeptide: Cytochrome P450 1A2 (515 aa).

The O-linked (GlcNAc) serine glycan is linked to serine 69. Phenylalanine 226 is a substrate binding site. Cysteine 458 is a heme binding site.

It belongs to the cytochrome P450 family. Interacts with PGRMC1; the interaction requires PGRMC1 homodimerization. Heme serves as cofactor.

The protein localises to the endoplasmic reticulum membrane. The protein resides in the microsome membrane. The catalysed reaction is an organic molecule + reduced [NADPH--hemoprotein reductase] + O2 = an alcohol + oxidized [NADPH--hemoprotein reductase] + H2O + H(+). It carries out the reaction 17beta-estradiol + reduced [NADPH--hemoprotein reductase] + O2 = 2-hydroxy-17beta-estradiol + oxidized [NADPH--hemoprotein reductase] + H2O + H(+). It catalyses the reaction 17beta-estradiol + reduced [NADPH--hemoprotein reductase] + O2 = 4-hydroxy-17beta-estradiol + oxidized [NADPH--hemoprotein reductase] + H2O + H(+). The enzyme catalyses estrone + reduced [NADPH--hemoprotein reductase] + O2 = 2-hydroxyestrone + oxidized [NADPH--hemoprotein reductase] + H2O + H(+). The catalysed reaction is estrone + reduced [NADPH--hemoprotein reductase] + O2 = 4-hydroxyestrone + oxidized [NADPH--hemoprotein reductase] + H2O + H(+). It carries out the reaction cholesterol + reduced [NADPH--hemoprotein reductase] + O2 = 25-hydroxycholesterol + oxidized [NADPH--hemoprotein reductase] + H2O + H(+). It catalyses the reaction all-trans-retinol + reduced [NADPH--hemoprotein reductase] + O2 = all-trans-retinal + oxidized [NADPH--hemoprotein reductase] + 2 H2O + H(+). The enzyme catalyses all-trans-retinal + reduced [NADPH--hemoprotein reductase] + O2 = all-trans-retinoate + oxidized [NADPH--hemoprotein reductase] + H2O + 2 H(+). The catalysed reaction is (5Z,8Z,11Z,14Z)-eicosatetraenoate + reduced [NADPH--hemoprotein reductase] + O2 = (14R,15S)-epoxy-(5Z,8Z,11Z)-eicosatrienoate + oxidized [NADPH--hemoprotein reductase] + H2O + H(+). It carries out the reaction (5Z,8Z,11Z,14Z)-eicosatetraenoate + reduced [NADPH--hemoprotein reductase] + O2 = (14S,15R)-epoxy-(5Z,8Z,11Z)-eicosatrienoate + oxidized [NADPH--hemoprotein reductase] + H2O + H(+). It catalyses the reaction (5Z,8Z,11Z,14Z,17Z)-eicosapentaenoate + reduced [NADPH--hemoprotein reductase] + O2 = (17R,18S)-epoxy-(5Z,8Z,11Z,14Z)-eicosatetraenoate + oxidized [NADPH--hemoprotein reductase] + H2O + H(+). The enzyme catalyses (4Z,7Z,10Z,13Z,16Z,19Z)-docosahexaenoate + reduced [NADPH--hemoprotein reductase] + O2 = (19R,20S)-epoxy-(4Z,7Z,10Z,13Z,16Z)-docosapentaenoate + oxidized [NADPH--hemoprotein reductase] + H2O + H(+). The catalysed reaction is (5S)-hydroperoxy-(6E,8Z,11Z,14Z)-eicosatetraenoate = 5-oxo-(6E,8Z,11Z,14Z)-eicosatetraenoate + H2O. It carries out the reaction (12S)-hydroperoxy-(5Z,8Z,10E,14Z)-eicosatetraenoate = 12-oxo-(5Z,8Z,10E,14Z)-eicosatetraenoate + H2O. It catalyses the reaction (15S)-hydroperoxy-(5Z,8Z,11Z,13E)-eicosatetraenoate = 15-oxo-(5Z,8Z,11Z,13E)-eicosatetraenoate + H2O. The enzyme catalyses (13S)-hydroperoxy-(9Z,11E)-octadecadienoate = 13-oxo-(9Z,11E)-octadecadienoate + H2O. The catalysed reaction is (5Z,8Z,11Z,14Z)-eicosatetraenoate + reduced [NADPH--hemoprotein reductase] + O2 = 13-hydroxy-(5Z,8Z,11Z,14Z)-eicosatetraenoate + oxidized [NADPH--hemoprotein reductase] + H2O + H(+). It carries out the reaction (5Z,8Z,11Z,14Z)-eicosatetraenoate + reduced [NADPH--hemoprotein reductase] + O2 = 19-hydroxy-(5Z,8Z,11Z,14Z)-eicosatetraenoate + oxidized [NADPH--hemoprotein reductase] + H2O + H(+). It catalyses the reaction (9Z,12Z)-octadecadienoate + reduced [NADPH--hemoprotein reductase] + O2 = 11-hydroxy-(9Z,12Z)-octadecadienoate + oxidized [NADPH--hemoprotein reductase] + H2O + H(+). It functions in the pathway cofactor metabolism; retinol metabolism. Its pathway is steroid metabolism; cholesterol metabolism. It participates in lipid metabolism; arachidonate metabolism. Functionally, a cytochrome P450 monooxygenase involved in the metabolism of various endogenous substrates, including fatty acids, steroid hormones and vitamins. Mechanistically, uses molecular oxygen inserting one oxygen atom into a substrate, and reducing the second into a water molecule, with two electrons provided by NADPH via cytochrome P450 reductase (NADPH--hemoprotein reductase). Catalyzes the hydroxylation of carbon-hydrogen bonds. Exhibits high catalytic activity for the formation of hydroxyestrogens from estrone (E1) and 17beta-estradiol (E2), namely 2-hydroxy E1 and E2. Metabolizes cholesterol toward 25-hydroxycholesterol, a physiological regulator of cellular cholesterol homeostasis. May act as a major enzyme for all-trans retinoic acid biosynthesis in the liver. Catalyzes two successive oxidative transformation of all-trans retinol to all-trans retinal and then to the active form all-trans retinoic acid. Primarily catalyzes stereoselective epoxidation of the last double bond of polyunsaturated fatty acids (PUFA), displaying a strong preference for the (R,S) stereoisomer. Catalyzes bisallylic hydroxylation and omega-1 hydroxylation of PUFA. May also participate in eicosanoids metabolism by converting hydroperoxide species into oxo metabolites (lipoxygenase-like reaction, NADPH-independent). Plays a role in the oxidative metabolism of xenobiotics. Catalyzes the N-hydroxylation of heterocyclic amines and the O-deethylation of phenacetin. Metabolizes caffeine via N3-demethylation. The chain is Cytochrome P450 1A2 (CYP1A2) from Cavia porcellus (Guinea pig).